A 714-amino-acid chain; its full sequence is Interferon-induced GTP-binding protein Mx2 (714 aa).

A disordered region spans residues 1-89 (MSMSYRALKF…QRSKGSENNL (89 aa)). Composition is skewed to polar residues over residues 61 to 70 (NNFNQLNLDP) and 79 to 88 (QQRSKGSENN). The Dynamin-type G domain occupies 115–386 (DLALPAIAVI…LIWHINKSLP (272 aa)). Residues 125 to 132 (GDQSSGKS) are G1 motif. 125–132 (GDQSSGKS) is a GTP binding site. The tract at residues 150 to 152 (ITR) is G2 motif. Residues 224 to 227 (DLPG) form a G3 motif region. GTP is bound by residues 224–228 (DLPGI) and 293–296 (TKPD). The segment at 293 to 296 (TKPD) is G4 motif. The tract at residues 325 to 328 (KCRG) is G5 motif. In terms of domain architecture, GED spans 622–713 (IVEIGVHLNA…ALYEFPHFKS (92 aa)).

It belongs to the TRAFAC class dynamin-like GTPase superfamily. Dynamin/Fzo/YdjA family.

It localises to the cytoplasm. It is found in the nucleus. Functionally, interferon-induced dynamin-like GTPase with antiviral activity. The sequence is that of Interferon-induced GTP-binding protein Mx2 (MX2) from Ovis aries (Sheep).